A 1357-amino-acid polypeptide reads, in one-letter code: Regulator of V-ATPase in vacuolar membrane protein 1 (1357 aa).

WD repeat units lie at residues 98-134 (HDDT…GVYQ), 142-182 (KQPK…GEQA), 190-239 (PHPK…KNHT), 384-423 (GHNK…HGVS), 431-470 (QTES…KEDS), 595-636 (INTG…LEYE), 638-679 (TFHN…YTNN), and 898-939 (QKSI…RIAY). The segment at 1243–1357 (GSPSASDIES…ITKNLLDDFV (115 aa)) is disordered. Phosphoserine occurs at positions 1244 and 1248. Residues 1272 to 1288 (STSSNSLAQSSSSAPRS) are compositionally biased toward low complexity. Over residues 1320-1332 (SENRKDKLSKDIL) the composition is skewed to basic and acidic residues.

Component of the RAVE complex composed of RAV1, RAV2 and CBF3D/SKP1. Within the complex, it interacts directly with RAV2 and CBF3D. Interacts with the V-ATPase V1 subunits VMA1, VMA2 and VMA8.

It is found in the endomembrane system. Component of the RAVE complex, which is required for stable assembly of the vacuolar ATPase complex V-ATPase under many conditions. Required for transport between the early endosome and the late endosome/prevacuolar compartment (PVC), suggesting that assembly of vacuolar ATPase at the early endosome is required for transport from the early endosome to the PVC. The sequence is that of Regulator of V-ATPase in vacuolar membrane protein 1 (RAV1) from Saccharomyces cerevisiae (strain ATCC 204508 / S288c) (Baker's yeast).